Consider the following 984-residue polypeptide: Probable translation initiation factor IF-2 (984 aa).

A DOD-type homing endonuclease domain is found at 94–215; sequence VNGWYSVTVT…LPLLLLRFGI (122 aa). Residues 391 to 608 form the tr-type G domain; sequence TTETHNFVAN…LIAGLSQKYL (218 aa). GTP-binding positions include 464-468 and 518-521; these read DTPGH and NKID.

Belongs to the TRAFAC class translation factor GTPase superfamily. Classic translation factor GTPase family. IF-2 subfamily. This protein undergoes a protein self splicing that involves a post-translational excision of the intervening region (intein) followed by peptide ligation.

In terms of biological role, function in general translation initiation by promoting the binding of the formylmethionine-tRNA to ribosomes. Seems to function along with eIF-2. This Pyrococcus furiosus (strain ATCC 43587 / DSM 3638 / JCM 8422 / Vc1) protein is Probable translation initiation factor IF-2 (infB).